Here is a 336-residue protein sequence, read N- to C-terminus: Fructose-1,6-bisphosphatase class 1 (336 aa).

Mg(2+) contacts are provided by Glu90, Asp112, Leu114, and Asp115. Substrate contacts are provided by residues 115 to 118 (DGSS), Asn211, and Lys277. Glu283 contributes to the Mg(2+) binding site.

Belongs to the FBPase class 1 family. As to quaternary structure, homotetramer. Mg(2+) serves as cofactor.

It is found in the cytoplasm. The catalysed reaction is beta-D-fructose 1,6-bisphosphate + H2O = beta-D-fructose 6-phosphate + phosphate. It participates in carbohydrate biosynthesis; gluconeogenesis. This chain is Fructose-1,6-bisphosphatase class 1, found in Pseudomonas paraeruginosa (strain DSM 24068 / PA7) (Pseudomonas aeruginosa (strain PA7)).